The chain runs to 172 residues: DCC family protein At1g52590, chloroplastic (172 aa).

Residues 1–25 constitute a chloroplast transit peptide; it reads MAILIPASFGRLTITSRAQVRVRVS.

Belongs to the DCC thiol-disulfide oxidoreductase family.

Its subcellular location is the plastid. The protein localises to the chloroplast. This Arabidopsis thaliana (Mouse-ear cress) protein is DCC family protein At1g52590, chloroplastic.